A 161-amino-acid chain; its full sequence is Cuticle protein 16.8 (161 aa).

Gln-1 carries the post-translational modification Pyrrolidone carboxylic acid. Positions 1-10 are enriched in pro residues; that stretch reads QSEPAGPPQP. Disordered regions lie at residues 1–44 and 67–103; these read QSEP…YSYT and ETNEPGTKTSNPADAQIVSNAATDSYSPSPASSPAKP. Residues 8 to 74 form the Chitin-binding type R&amp;R domain; the sequence is PQPYTFSYDN…TVETNEPGTK (67 aa). Residues 67–86 show a composition bias toward polar residues; the sequence is ETNEPGTKTSNPADAQIVSN. Low complexity predominate over residues 87-103; it reads AATDSYSPSPASSPAKP.

In terms of biological role, component of the cuticle of the tick. Binds chitin. This chain is Cuticle protein 16.8, found in Ixodes ricinus (Common tick).